The primary structure comprises 876 residues: Xylosyltransferase oxt (876 aa).

The Cytoplasmic portion of the chain corresponds to 1 to 14 (MEQSVSARWLKRYR). The chain crosses the membrane as a helical; Signal-anchor for type II membrane protein span at residues 15–35 (AFFLILLLIVAIQLFLAYKSL). The Lumenal segment spans residues 36–876 (DIVGGGSGSG…PKSDVDALLK (841 aa)). The interval 48–67 (AAEAPASPPPPHAQARVQPP) is disordered. 4 cysteine pairs are disulfide-bonded: C83–C111, C127–C465, C484–C497, and C486–C495. 2 N-linked (GlcNAc...) asparagine glycosylation sites follow: N131 and N135. Residues 134 to 228 (ANVSLGCFKD…FYAMNIYETG (95 aa)) enclose the WSC domain. UDP-alpha-D-xylose is bound by residues D283 and 312–314 (TIW). Residue N342 is glycosylated (N-linked (GlcNAc...) asparagine). 415–416 (DW) is a UDP-alpha-D-xylose binding site. Residues S498 and 522–523 (RK) contribute to the UDP-alpha-D-xylose site. N-linked (GlcNAc...) asparagine glycosylation is found at N696 and N725. C842 and C855 are disulfide-bonded.

The protein belongs to the glycosyltransferase 14 family. XylT subfamily. The cofactor is Ca(2+). Mn(2+) serves as cofactor. Mg(2+) is required as a cofactor.

The protein resides in the endoplasmic reticulum membrane. The protein localises to the golgi apparatus membrane. The enzyme catalyses UDP-alpha-D-xylose + L-seryl-[protein] = 3-O-(beta-D-xylosyl)-L-seryl-[protein] + UDP + H(+). It participates in glycan metabolism; chondroitin sulfate biosynthesis. It functions in the pathway glycan metabolism; heparan sulfate biosynthesis. Its function is as follows. Catalyzes the first step in biosynthesis of glycosaminoglycan. Transfers D-xylose from UDP-D-xylose to specific serine residues of the core protein. The polypeptide is Xylosyltransferase oxt (Drosophila melanogaster (Fruit fly)).